We begin with the raw amino-acid sequence, 265 residues long: Mlc titration factor A (265 aa).

Positions 111, 148, 152, and 211 each coordinate Zn(2+).

This sequence belongs to the MtfA family. In terms of assembly, interacts with Mlc. Zn(2+) is required as a cofactor.

The protein resides in the cytoplasm. Functionally, involved in the modulation of the activity of the glucose-phosphotransferase system (glucose-PTS). Interacts with the transcriptional repressor Mlc, preventing its interaction with DNA and leading to the modulation of expression of genes regulated by Mlc, including ptsG, which encodes the PTS system glucose-specific EIICB component. In terms of biological role, shows zinc-dependent metallopeptidase activity. This is Mlc titration factor A from Escherichia coli (strain UTI89 / UPEC).